A 99-amino-acid polypeptide reads, in one-letter code: Plastocyanin (99 aa).

The 99-residue stretch at 1–99 folds into the Plastocyanin-like domain; it reads IEIKLGGDDG…AGMVGKVTVQ (99 aa). Positions 37, 84, 87, and 92 each coordinate Cu cation.

Belongs to the plastocyanin family. It depends on Cu(2+) as a cofactor.

The protein localises to the plastid. It localises to the chloroplast thylakoid membrane. In terms of biological role, participates in electron transfer between P700 and the cytochrome b6-f complex in photosystem I. This chain is Plastocyanin (PETE), found in Rumex obtusifolius (Bitter dock).